The chain runs to 186 residues: Adenylate kinase (186 aa).

Residue 10 to 15 (GSGKGT) coordinates ATP. The interval 30 to 55 (ATGDVFRERMKTDMALRDIVSSGGYV) is NMP. Residues T31, R36, 53–55 (GYV), 81–84 (GYPR), and Q88 each bind AMP. Residues 122-132 (ARSKESGRTDD) are LID. R123 contributes to the ATP binding site. Positions 129 and 140 each coordinate AMP. K168 serves as a coordination point for ATP.

Belongs to the adenylate kinase family. In terms of assembly, monomer.

The protein localises to the cytoplasm. The catalysed reaction is AMP + ATP = 2 ADP. It functions in the pathway purine metabolism; AMP biosynthesis via salvage pathway; AMP from ADP: step 1/1. Functionally, catalyzes the reversible transfer of the terminal phosphate group between ATP and AMP. Plays an important role in cellular energy homeostasis and in adenine nucleotide metabolism. The sequence is that of Adenylate kinase from Tropheryma whipplei (strain TW08/27) (Whipple's bacillus).